Reading from the N-terminus, the 368-residue chain is Serine/threonine-protein kinase CAK1 (368 aa).

Residues 1-368 enclose the Protein kinase domain; that stretch reads MKLDSIDITH…QRILQELEKP (368 aa). D156 (proton acceptor) is an active-site residue.

It belongs to the protein kinase superfamily. CMGC Ser/Thr protein kinase family. CDC2/CDKX subfamily.

It catalyses the reaction L-seryl-[protein] + ATP = O-phospho-L-seryl-[protein] + ADP + H(+). It carries out the reaction L-threonyl-[protein] + ATP = O-phospho-L-threonyl-[protein] + ADP + H(+). This is Serine/threonine-protein kinase CAK1 (CAK1) from Saccharomyces cerevisiae (strain ATCC 204508 / S288c) (Baker's yeast).